The primary structure comprises 303 residues: Elongation factor Ts (303 aa).

The involved in Mg(2+) ion dislocation from EF-Tu stretch occupies residues 80 to 83 (TDFV).

This sequence belongs to the EF-Ts family.

The protein resides in the cytoplasm. Functionally, associates with the EF-Tu.GDP complex and induces the exchange of GDP to GTP. It remains bound to the aminoacyl-tRNA.EF-Tu.GTP complex up to the GTP hydrolysis stage on the ribosome. The protein is Elongation factor Ts of Clostridium botulinum (strain Eklund 17B / Type B).